The chain runs to 199 residues: Holliday junction branch migration complex subunit RuvA (199 aa).

The segment at 1–64 is domain I; it reads MIGRISGLLL…EDGHFLYGFA (64 aa). The tract at residues 65–143 is domain II; that stretch reads TDEERTAFRQ…KALPQVAGAR (79 aa). The interval 144-154 is flexible linker; that stretch reads LAAVAGGAPDA. Positions 154–199 are domain III; sequence AKSDILNALLALGYNEKEALGAMKGLAEDTGVSDGIRQALKLLSKA.

It belongs to the RuvA family. As to quaternary structure, homotetramer. Forms an RuvA(8)-RuvB(12)-Holliday junction (HJ) complex. HJ DNA is sandwiched between 2 RuvA tetramers; dsDNA enters through RuvA and exits via RuvB. An RuvB hexamer assembles on each DNA strand where it exits the tetramer. Each RuvB hexamer is contacted by two RuvA subunits (via domain III) on 2 adjacent RuvB subunits; this complex drives branch migration. In the full resolvosome a probable DNA-RuvA(4)-RuvB(12)-RuvC(2) complex forms which resolves the HJ.

The protein localises to the cytoplasm. Functionally, the RuvA-RuvB-RuvC complex processes Holliday junction (HJ) DNA during genetic recombination and DNA repair, while the RuvA-RuvB complex plays an important role in the rescue of blocked DNA replication forks via replication fork reversal (RFR). RuvA specifically binds to HJ cruciform DNA, conferring on it an open structure. The RuvB hexamer acts as an ATP-dependent pump, pulling dsDNA into and through the RuvAB complex. HJ branch migration allows RuvC to scan DNA until it finds its consensus sequence, where it cleaves and resolves the cruciform DNA. The protein is Holliday junction branch migration complex subunit RuvA of Azoarcus sp. (strain BH72).